A 307-amino-acid chain; its full sequence is UDP-N-acetylenolpyruvoylglucosamine reductase (307 aa).

Residues 33–198 form the FAD-binding PCMH-type domain; sequence KVGGPADIFV…LNATFALQKG (166 aa). Residue Arg177 is part of the active site. Ser227 (proton donor) is an active-site residue. Residue Glu297 is part of the active site.

The protein belongs to the MurB family. FAD serves as cofactor.

The protein resides in the cytoplasm. The catalysed reaction is UDP-N-acetyl-alpha-D-muramate + NADP(+) = UDP-N-acetyl-3-O-(1-carboxyvinyl)-alpha-D-glucosamine + NADPH + H(+). It functions in the pathway cell wall biogenesis; peptidoglycan biosynthesis. In terms of biological role, cell wall formation. This Clostridium novyi (strain NT) protein is UDP-N-acetylenolpyruvoylglucosamine reductase.